A 248-amino-acid chain; its full sequence is tRNA (guanine-N(7)-)-methyltransferase (248 aa).

Residues glycine 70, 93-94 (EI), 129-130 (NA), and leucine 149 each bind S-adenosyl-L-methionine. Aspartate 152 is a catalytic residue. An S-adenosyl-L-methionine-binding site is contributed by 227–229 (SEE).

It belongs to the class I-like SAM-binding methyltransferase superfamily. TrmB family.

The protein resides in the nucleus. The catalysed reaction is guanosine(46) in tRNA + S-adenosyl-L-methionine = N(7)-methylguanosine(46) in tRNA + S-adenosyl-L-homocysteine. The protein operates within tRNA modification; N(7)-methylguanine-tRNA biosynthesis. In terms of biological role, catalyzes the formation of N(7)-methylguanine at position 46 (m7G46) in tRNA. The protein is tRNA (guanine-N(7)-)-methyltransferase of Drosophila mojavensis (Fruit fly).